The sequence spans 580 residues: Conglutin beta 3 (580 aa).

An N-terminal signal peptide occupies residues 1–30 (MAKMRVRFPTLVLLLGIVFLMAVSIGIAYG). 2 stretches are compositionally biased toward basic and acidic residues: residues 37–72 (NHER…RESE) and 79–92 (REQR…REQE). The segment at 37-165 (NHERPQEREQ…DSRRQRNPYY (129 aa)) is disordered. Over residues 124–133 (QGSSSSSRRQ) the composition is skewed to low complexity. A compositionally biased stretch (basic and acidic residues) spans 134–145 (SGYERREQREER). Cupin type-1 domains lie at 164-322 (YYFS…EEIQ) and 381-538 (FNLR…EDVE). 2 N-linked (GlcNAc...) asparagine glycosylation sites follow: Asn-229 and Asn-488. The segment at 549 to 569 (FANAQPQQQQQREREGRHGRR) is disordered.

It belongs to the 7S seed storage protein family. As to quaternary structure, component of globulins complexes which accumulate in seeds.

Seed storage protein. Accumulates during seed development and is hydrolyzed after germination to provide a carbon and nitrogen source for the developing seedling. This is Conglutin beta 3 from Lupinus angustifolius (Narrow-leaved blue lupine).